We begin with the raw amino-acid sequence, 546 residues long: Carboxypeptidase Y homolog A (546 aa).

Positions 1 to 17 (MKLLASTVLMGAAAASI) are cleaved as a signal peptide. A propeptide spanning residues 18 to 132 (APQQQVLKNP…KLEKYNMRAK (115 aa)) is cleaved from the precursor. Intrachain disulfides connect C186–C426, C320–C334, C344–C367, C351–C360, and C389–C396. Residue N217 is glycosylated (N-linked (GlcNAc...) asparagine). The active site involves S273. The active site involves D465. A glycan (N-linked (GlcNAc...) asparagine) is linked at N512. H523 is a catalytic residue.

The protein belongs to the peptidase S10 family.

It is found in the vacuole. The catalysed reaction is Release of a C-terminal amino acid with broad specificity.. In terms of biological role, vacuolar carboxypeptidase involved in degradation of small peptides. Digests preferentially peptides containing an aliphatic or hydrophobic residue in P1' position, as well as methionine, leucine or phenylalanine in P1 position of ester substrate. This Sclerotinia sclerotiorum (strain ATCC 18683 / 1980 / Ss-1) (White mold) protein is Carboxypeptidase Y homolog A (cpyA).